Consider the following 501-residue polypeptide: DDB1- and CUL4-associated factor 12-like protein 1 (501 aa).

Polar residues predominate over residues 1–37; sequence MRQADSQTQPSPAEQETPQPAGPSNRSPPTMGPQQTG. A disordered region spans residues 1 to 67; that stretch reads MRQADSQTQP…PAAPMATAGE (67 aa). WD repeat units follow at residues 185–225, 230–268, 298–337, and 384–423; these read PPSC…PVCL, GHRDWIFAIAWMSDTVAVSGSRDGTVALWKVDPDMFNGS, PGNRKVRALAFSNKNQELGAVSLDGYFHLWKARSSLSRLL, and SREGGTGVRSLSVHQHIVTVGTGHGSLLFYDIRAQKFLEE.

This sequence belongs to the WD repeat DCAF12 family.

This Mus musculus (Mouse) protein is DDB1- and CUL4-associated factor 12-like protein 1 (Dcaf12l1).